Reading from the N-terminus, the 81-residue chain is LYR motif-containing protein At3g19508 (81 aa).

It belongs to the complex I LYR family. LYRM9 subfamily.

This is LYR motif-containing protein At3g19508 from Arabidopsis thaliana (Mouse-ear cress).